The following is a 93-amino-acid chain: Em protein H2 (93 aa).

Residues Met-1–Ser-93 form a disordered region. 3 stretches are compositionally biased toward basic and acidic residues: residues Ser-9 to Glu-19, Leu-31 to Met-52, and Gly-73 to Ser-93.

It belongs to the small hydrophilic plant seed protein family.

Functionally, it is thought to provide protection for the cytoplasm during the desiccation stage of embryo development. The polypeptide is Em protein H2 (EMH2) (Triticum aestivum (Wheat)).